A 153-amino-acid polypeptide reads, in one-letter code: UPF0540 protein At1g62220 (153 aa).

A signal peptide spans 1–21 (MNATKFVVLLVISVLCAIVTA). 2 disordered regions span residues 63-82 (SSATGFNNPKGPDANAYENG) and 122-153 (ARANGKVASASRVKGSSEKKKGKGKKGKGKKD). The span at 122–132 (ARANGKVASAS) shows a compositional bias: low complexity. Positions 141-153 (KKGKGKKGKGKKD) are enriched in basic residues.

The protein belongs to the UPF0540 family.

The sequence is that of UPF0540 protein At1g62220 from Arabidopsis thaliana (Mouse-ear cress).